The sequence spans 394 residues: Zinc-regulated GTPase metalloprotein activator 1 (394 aa).

The psi-PxLVp motif signature appears at 16–23 (EDCPELVP). Residue 48–55 (GYLGAGKT) coordinates GTP. Residues Cys-106, Cys-108, and Cys-109 each coordinate Zn(2+). The short motif at 106 to 109 (CLCC) is the CXCC motif element. GTP contacts are provided by residues 109 to 113 (CSVKD) and 202 to 205 (NKTD). Residues 272–375 (IVTVTFDVPG…ILQQLFITAV (104 aa)) form the CobW C-terminal domain.

This sequence belongs to the SIMIBI class G3E GTPase family. ZNG1 subfamily.

The protein localises to the nucleus. The enzyme catalyses GTP + H2O = GDP + phosphate + H(+). Functionally, zinc chaperone that directly transfers zinc cofactor to target metalloproteins, thereby activating them. Catalyzes zinc insertion into the active site of methionine aminopeptidase METAP1, which function to cleave the initiator methionine from polypeptides during or after protein translation. Mechanistically, the N-terminal psi-PxLVp motif binds to the C6H2-type zinc finger of inactive form of METAP1. After formation of the docked complex, zinc is transferred from the CXCC motif in the GTPase domain of ZNG1 to the zinc binding site in the peptidase domain of METAP1 in a process requiring GTP hydrolysis. GTP/GDP exchange is required for release of active METAP1. This Rattus norvegicus (Rat) protein is Zinc-regulated GTPase metalloprotein activator 1 (Zng1).